The following is an 806-amino-acid chain: Polyribonucleotide nucleotidyltransferase (806 aa).

Asp-488 and Asp-494 together coordinate Mg(2+). The region spanning 555 to 614 is the KH domain; the sequence is PQIRTVQIPTDKIRDLIGPGGKTIRGIIEATQVKIDVDDTGRVNIASSDEEGLKKALAMI. In terms of domain architecture, S1 motif spans 624–691; that stretch reads GKTYLGKVVR…EGNRIKLSRK (68 aa). Residues 698–806 are disordered; it reads RQKLGLPEPG…QGGGGNRGPQ (109 aa). Low complexity predominate over residues 704 to 717; that stretch reads PEPGAEAPAAAEGQ. Acidic residues predominate over residues 738–757; sequence GGEDFDDFDEEGGEGEGEDE. Positions 758 to 774 are enriched in basic and acidic residues; sequence NFNREDTPNSAPGERRP. Over residues 783–792 the composition is skewed to basic residues; sequence RGRRRRRGRG. The span at 793-806 shows a compositional bias: gly residues; that stretch reads RGPGQGGGGNRGPQ.

The protein belongs to the polyribonucleotide nucleotidyltransferase family. Mg(2+) serves as cofactor.

The protein localises to the cytoplasm. It catalyses the reaction RNA(n+1) + phosphate = RNA(n) + a ribonucleoside 5'-diphosphate. Its function is as follows. Involved in mRNA degradation. Catalyzes the phosphorolysis of single-stranded polyribonucleotides processively in the 3'- to 5'-direction. In Acidobacterium capsulatum (strain ATCC 51196 / DSM 11244 / BCRC 80197 / JCM 7670 / NBRC 15755 / NCIMB 13165 / 161), this protein is Polyribonucleotide nucleotidyltransferase.